The primary structure comprises 77 residues: Sec-independent protein translocase protein TatA (77 aa).

A helical transmembrane segment spans residues 1 to 21 (MGGISIWQLLIIALIVVLLFG). Composition is skewed to basic and acidic residues over residues 47–56 (EKKALEDKEA) and 65–77 (TEKKPEADKKEQA). The interval 47-77 (EKKALEDKEAAAQTTQQATEKKPEADKKEQA) is disordered.

This sequence belongs to the TatA/E family. The Tat system comprises two distinct complexes: a TatABC complex, containing multiple copies of TatA, TatB and TatC subunits, and a separate TatA complex, containing only TatA subunits. Substrates initially bind to the TatABC complex, which probably triggers association of the separate TatA complex to form the active translocon.

The protein localises to the cell inner membrane. Functionally, part of the twin-arginine translocation (Tat) system that transports large folded proteins containing a characteristic twin-arginine motif in their signal peptide across membranes. TatA could form the protein-conducting channel of the Tat system. The chain is Sec-independent protein translocase protein TatA from Shewanella amazonensis (strain ATCC BAA-1098 / SB2B).